Here is a 535-residue protein sequence, read N- to C-terminus: CTP synthase (535 aa).

The amidoligase domain stretch occupies residues 1 to 267; the sequence is MTKYIFVTGG…DKLVCDHMKL (267 aa). Serine 13 is a binding site for CTP. A UTP-binding site is contributed by serine 13. Position 14–19 (14–19) interacts with ATP; the sequence is SLGKGI. An L-glutamine-binding site is contributed by tyrosine 54. Aspartate 71 serves as a coordination point for ATP. Mg(2+)-binding residues include aspartate 71 and glutamate 141. Residues 148-150, 188-193, and lysine 224 each bind CTP; these read DIE and KTKPTQ. UTP contacts are provided by residues 188–193 and lysine 224; that span reads KTKPTQ. Positions 292 to 534 constitute a Glutamine amidotransferase type-1 domain; it reads TISLVGKYVE…IGASVQAAEQ (243 aa). Glycine 354 is an L-glutamine binding site. Cysteine 381 serves as the catalytic Nucleophile; for glutamine hydrolysis. L-glutamine contacts are provided by residues 382-385, glutamate 405, and arginine 462; that span reads LGMQ. Catalysis depends on residues histidine 507 and glutamate 509.

This sequence belongs to the CTP synthase family. In terms of assembly, homotetramer.

It catalyses the reaction UTP + L-glutamine + ATP + H2O = CTP + L-glutamate + ADP + phosphate + 2 H(+). The catalysed reaction is L-glutamine + H2O = L-glutamate + NH4(+). The enzyme catalyses UTP + NH4(+) + ATP = CTP + ADP + phosphate + 2 H(+). The protein operates within pyrimidine metabolism; CTP biosynthesis via de novo pathway; CTP from UDP: step 2/2. With respect to regulation, allosterically activated by GTP, when glutamine is the substrate; GTP has no effect on the reaction when ammonia is the substrate. The allosteric effector GTP functions by stabilizing the protein conformation that binds the tetrahedral intermediate(s) formed during glutamine hydrolysis. Inhibited by the product CTP, via allosteric rather than competitive inhibition. Catalyzes the ATP-dependent amination of UTP to CTP with either L-glutamine or ammonia as the source of nitrogen. Regulates intracellular CTP levels through interactions with the four ribonucleotide triphosphates. In Bacillus velezensis (strain DSM 23117 / BGSC 10A6 / LMG 26770 / FZB42) (Bacillus amyloliquefaciens subsp. plantarum), this protein is CTP synthase.